Consider the following 180-residue polypeptide: Large ribosomal subunit protein uL6 (180 aa).

This sequence belongs to the universal ribosomal protein uL6 family. In terms of assembly, part of the 50S ribosomal subunit.

In terms of biological role, this protein binds to the 23S rRNA, and is important in its secondary structure. It is located near the subunit interface in the base of the L7/L12 stalk, and near the tRNA binding site of the peptidyltransferase center. This chain is Large ribosomal subunit protein uL6, found in Borreliella afzelii (strain PKo) (Borrelia afzelii).